The chain runs to 1435 residues: DNA polymerase III PolC-type (1435 aa).

Residues 420–576 (YVVFDVETTG…YDTEATGYLL (157 aa)) form the Exonuclease domain.

It belongs to the DNA polymerase type-C family. PolC subfamily.

Its subcellular location is the cytoplasm. The catalysed reaction is DNA(n) + a 2'-deoxyribonucleoside 5'-triphosphate = DNA(n+1) + diphosphate. Functionally, required for replicative DNA synthesis. This DNA polymerase also exhibits 3' to 5' exonuclease activity. This is DNA polymerase III PolC-type from Bacillus cereus (strain ATCC 14579 / DSM 31 / CCUG 7414 / JCM 2152 / NBRC 15305 / NCIMB 9373 / NCTC 2599 / NRRL B-3711).